The primary structure comprises 330 residues: Trans-1,2-dihydrobenzene-1,2-diol dehydrogenase (330 aa).

This sequence belongs to the Gfo/Idh/MocA family. In terms of assembly, homodimer.

The catalysed reaction is (1R,2R)-1,2-dihydrobenzene-1,2-diol + NADP(+) = catechol + NADPH + H(+). It carries out the reaction D-xylose + NADP(+) = D-xylono-1,5-lactone + NADPH + H(+). The protein is Trans-1,2-dihydrobenzene-1,2-diol dehydrogenase (dhdh) of Xenopus laevis (African clawed frog).